Reading from the N-terminus, the 352-residue chain is MNETTPLLLRAARGENVERPPVWMMRQAGRYMKVYRDLRDNHPSFRERSENPDLSYEISMQPFKAFQPDGVILFSDILTPLPGMGINFDIVESKGPLINDPIRSLKQVKDLKPLQPEESMSFVGEVLGRLRESVGNKAAVLGFVGAPWTLAAYVVEGKSSKNYAVIKAMAFQEPELLHQLLNHFAESIANYLSYQIQSGAQVVQMFDSWAGQLSPQDYDEFAAPYQQKVVNLVKEKHPDTPMILYISGSAGVIERMGQTGVDIVSLDWTVDMADGLKRLPQAVGVQGNVDPGLLFGTPDAIRSRIVDVVRKAKGRKHILNLGHGILPGTPEENARVFFEAGKNVNELIKVSS.

Residues 26–30, Asp76, Tyr153, Ser208, and His323 each bind substrate; that span reads RQAGR.

The protein belongs to the uroporphyrinogen decarboxylase family. Homodimer.

Its subcellular location is the cytoplasm. The enzyme catalyses uroporphyrinogen III + 4 H(+) = coproporphyrinogen III + 4 CO2. The protein operates within porphyrin-containing compound metabolism; protoporphyrin-IX biosynthesis; coproporphyrinogen-III from 5-aminolevulinate: step 4/4. Catalyzes the decarboxylation of four acetate groups of uroporphyrinogen-III to yield coproporphyrinogen-III. The protein is Uroporphyrinogen decarboxylase of Prochlorococcus marinus (strain NATL2A).